The sequence spans 451 residues: Tubulin alpha-1B chain (451 aa).

An MREC motif motif is present at residues 1 to 4 (MREC). GTP is bound by residues Gly10, Gln11, Ala12, and Gln15. Lys40 carries the post-translational modification N6,N6,N6-trimethyllysine; alternate. The residue at position 40 (Lys40) is an N6-acetyllysine; alternate. The residue at position 48 (Ser48) is a Phosphoserine. The GTP site is built by Glu71, Ala99, Ser140, Gly143, Gly144, Thr145, Gly146, Thr179, Glu183, Asn206, Tyr224, and Asn228. Glu71 is a Mg(2+) binding site. The residue at position 232 (Ser232) is a Phosphoserine. Residue Leu252 participates in GTP binding. Residue Glu254 is part of the active site. Tyr282 carries the 3'-nitrotyrosine modification. Lys326 is covalently cross-linked (Glycyl lysine isopeptide (Lys-Gly) (interchain with G-Cter in ubiquitin)). Arg339 is modified (omega-N-methylarginine). Residue Lys370 forms a Glycyl lysine isopeptide (Lys-Gly) (interchain with G-Cter in ubiquitin) linkage. Ser439 carries the post-translational modification Phosphoserine. 2 positions are modified to 5-glutamyl polyglutamate: Glu443 and Glu445. Tyr451 bears the 3'-nitrotyrosine mark.

This sequence belongs to the tubulin family. In terms of assembly, heterodimer of alpha- and beta-tubulin. A typical microtubule is a hollow water-filled tube with an outer diameter of 25 nm and an inner diameter of 15 nM. Alpha-beta heterodimers associate head-to-tail to form protofilaments running lengthwise along the microtubule wall with the beta-tubulin subunit facing the microtubule plus end conferring a structural polarity. Microtubules usually have 13 protofilaments but different protofilament numbers can be found in some organisms and specialized cells. Interacts with gamma-tubulin; the interaction allows microtubules to nucleate from the gamma-tubulin ring complex (gTuRC). Nascent microtubule interacts (via alpha-tubulin MREC motif) with TTC5/STRAP; this interaction may result in tubulin mRNA-targeted degradation. Component of sperm flagellar doublet microtubules. The cofactor is Mg(2+). In terms of processing, some glutamate residues at the C-terminus are polyglycylated, resulting in polyglycine chains on the gamma-carboxyl group. Glycylation is mainly limited to tubulin incorporated into axonemes (cilia and flagella) whereas glutamylation is prevalent in neuronal cells, centrioles, axonemes, and the mitotic spindle. Both modifications can coexist on the same protein on adjacent residues, and lowering polyglycylation levels increases polyglutamylation, and reciprocally. Cilia and flagella glycylation is required for their stability and maintenance. Flagella glycylation controls sperm motility. Post-translationally, some glutamate residues at the C-terminus are polyglutamylated, resulting in polyglutamate chains on the gamma-carboxyl group. Polyglutamylation plays a key role in microtubule severing by spastin (SPAST). SPAST preferentially recognizes and acts on microtubules decorated with short polyglutamate tails: severing activity by SPAST increases as the number of glutamates per tubulin rises from one to eight, but decreases beyond this glutamylation threshold. Glutamylation is also involved in cilia motility. Acetylation of alpha chains at Lys-40 is located inside the microtubule lumen. This modification has been correlated with increased microtubule stability, intracellular transport and ciliary assembly. In terms of processing, methylation of alpha chains at Lys-40 is found in mitotic microtubules and is required for normal mitosis and cytokinesis contributing to genomic stability. Post-translationally, nitration of Tyr-451 is irreversible and interferes with normal dynein intracellular distribution. Undergoes a tyrosination/detyrosination cycle, the cyclic removal and re-addition of a C-terminal tyrosine residue by the enzymes tubulin tyrosine carboxypeptidase (MATCAP1, VASH1 or VASH2) and tubulin tyrosine ligase (TTL), respectively. In terms of processing, tyrosination promotes microtubule interaction with CAP-Gly domain-containing proteins such as CLIP1, CLIP2 and DCTN1. Tyrosination regulates the initiation of dynein-dynactin motility via interaction with DCTN1, which brings the dynein-dynactin complex into contact with microtubules. In neurons, tyrosinated tubulins mediate the initiation of retrograde vesicle transport. Post-translationally, detyrosination is involved in metaphase plate congression by guiding chromosomes during mitosis: detyrosination promotes interaction with CENPE, promoting pole-proximal transport of chromosomes toward the equator. Detyrosination increases microtubules-dependent mechanotransduction in dystrophic cardiac and skeletal muscle. In cardiomyocytes, detyrosinated microtubules are required to resist to contractile compression during contraction: detyrosination promotes association with desmin (DES) at force-generating sarcomeres, leading to buckled microtubules and mechanical resistance to contraction.

The protein localises to the cytoplasm. It is found in the cytoskeleton. The catalysed reaction is GTP + H2O = GDP + phosphate + H(+). Tubulin is the major constituent of microtubules, protein filaments consisting of alpha- and beta-tubulin heterodimers. Microtubules grow by the addition of GTP-tubulin dimers to the microtubule end, where a stabilizing cap forms. Below the cap, tubulin dimers are in GDP-bound state, owing to GTPase activity of alpha-tubulin. In Pan troglodytes (Chimpanzee), this protein is Tubulin alpha-1B chain (TUBA1B).